We begin with the raw amino-acid sequence, 144 residues long: MRFPSIFTAVLFAASSALAAPVNTTTEDETAQIPAEAVIGYLDLEGDFDVAVLPFSNSTNNGLLFINTTIASIAAKEEGVSLDKREAEAWHWLQLKPGQPMYKREADAEAWHWLQLKPGQPMYKREADAEAWHWLQLKPGQPMY.

The or 20 signal peptide spans 1-19 (MRFPSIFTAVLFAASSALA).

In terms of biological role, the active factor is excreted into the culture medium by haploid cells of the alpha mating type and acts on cells of the opposite mating type (type A). It mediates the conjugation process between the two types by inhibiting the initiation of DNA synthesis in type a cells and synchronizing them with type alpha. The chain is Mating factor alpha from Saccharomyces uvarum (Yeast).